The sequence spans 128 residues: 2-iminobutanoate/2-iminopropanoate deaminase (128 aa).

This sequence belongs to the RutC family.

It localises to the cytoplasm. It catalyses the reaction 2-iminobutanoate + H2O = 2-oxobutanoate + NH4(+). It carries out the reaction 2-iminopropanoate + H2O = pyruvate + NH4(+). In terms of biological role, catalyzes the hydrolytic deamination of enamine/imine intermediates that form during the course of normal metabolism. May facilitate the release of ammonia from these potentially toxic reactive metabolites, reducing their impact on cellular components. It may act on enamine/imine intermediates formed by several types of pyridoxal-5'-phosphate-dependent dehydratases including L-threonine dehydratase. Preferentially digests Leu and Met in cooperation with L-amino acid oxidase, but digests Phe poorly. This chain is 2-iminobutanoate/2-iminopropanoate deaminase, found in Dermatophagoides farinae (American house dust mite).